The chain runs to 832 residues: Putative beta-glucosidase (832 aa).

Residue Asp225 is part of the active site. Residues 397-556 (TGKHGYVAKF…DPETEIDYAV (160 aa)) enclose the PA14 domain.

It belongs to the glycosyl hydrolase 3 family.

It localises to the cytoplasm. It carries out the reaction Hydrolysis of terminal, non-reducing beta-D-glucosyl residues with release of beta-D-glucose.. This is Putative beta-glucosidase from Schizosaccharomyces pombe (strain 972 / ATCC 24843) (Fission yeast).